The primary structure comprises 453 residues: Chromosomal replication initiator protein DnaA (453 aa).

Positions 1–74 (MKEKQFWNRI…GFEIYDAEIT (74 aa)) are domain I, interacts with DnaA modulators. The domain II stretch occupies residues 74–113 (TPHYIFTKPQDTTSSQVEEATNLTLYDYSPKLVSIPYSDT). Residues 114 to 331 (GLKEKYTFDN…GAINDITLIA (218 aa)) are domain III, AAA+ region. ATP is bound by residues Gly158, Gly160, Lys161, and Thr162. The tract at residues 332–453 (RVKKIKDITI…EIESIKKKIK (122 aa)) is domain IV, binds dsDNA.

The protein belongs to the DnaA family. In terms of assembly, oligomerizes as a right-handed, spiral filament on DNA at oriC.

The protein resides in the cytoplasm. In terms of biological role, plays an essential role in the initiation and regulation of chromosomal replication. ATP-DnaA binds to the origin of replication (oriC) to initiate formation of the DNA replication initiation complex once per cell cycle. Binds the DnaA box (a 9 base pair repeat at the origin) and separates the double-stranded (ds)DNA. Forms a right-handed helical filament on oriC DNA; dsDNA binds to the exterior of the filament while single-stranded (ss)DNA is stabiized in the filament's interior. The ATP-DnaA-oriC complex binds and stabilizes one strand of the AT-rich DNA unwinding element (DUE), permitting loading of DNA polymerase. After initiation quickly degrades to an ADP-DnaA complex that is not apt for DNA replication. Binds acidic phospholipids. The sequence is that of Chromosomal replication initiator protein DnaA from Streptococcus pneumoniae (strain P1031).